The primary structure comprises 163 residues: Shikimate kinase (163 aa).

ATP is bound at residue 10–15 (GVGKTT). Thr-14 is a Mg(2+) binding site. 3 residues coordinate substrate: Asp-28, Arg-52, and Gly-75. Arg-116 provides a ligand contact to ATP. Position 134 (Arg-134) interacts with substrate.

It belongs to the shikimate kinase family. As to quaternary structure, monomer. Mg(2+) serves as cofactor.

The protein localises to the cytoplasm. It carries out the reaction shikimate + ATP = 3-phosphoshikimate + ADP + H(+). It participates in metabolic intermediate biosynthesis; chorismate biosynthesis; chorismate from D-erythrose 4-phosphate and phosphoenolpyruvate: step 5/7. Its function is as follows. Catalyzes the specific phosphorylation of the 3-hydroxyl group of shikimic acid using ATP as a cosubstrate. The sequence is that of Shikimate kinase from Streptococcus suis (strain 98HAH33).